Consider the following 261-residue polypeptide: Carnitinyl-CoA dehydratase (261 aa).

Glu-111 acts as the Nucleophile in catalysis. The active-site Proton acceptor is Glu-131.

This sequence belongs to the enoyl-CoA hydratase/isomerase family.

It carries out the reaction (R)-carnitinyl-CoA = crotonobetainyl-CoA + H2O. It participates in amine and polyamine metabolism; carnitine metabolism. In terms of biological role, catalyzes the reversible dehydration of L-carnitinyl-CoA to crotonobetainyl-CoA. This is Carnitinyl-CoA dehydratase from Escherichia coli (strain ATCC 8739 / DSM 1576 / NBRC 3972 / NCIMB 8545 / WDCM 00012 / Crooks).